We begin with the raw amino-acid sequence, 342 residues long: Dihydroorotate dehydrogenase (quinone) (342 aa).

FMN contacts are provided by residues 60 to 64 (AGLDK) and Thr84. Lys64 contacts substrate. 109 to 113 (NRMGF) serves as a coordination point for substrate. FMN-binding residues include Asn137 and Asn170. Residue Asn170 coordinates substrate. The Nucleophile role is filled by Ser173. Asn175 provides a ligand contact to substrate. FMN contacts are provided by Lys215 and Thr243. Position 244 to 245 (244 to 245 (NT)) interacts with substrate. Residues Gly266, Gly295, and 316–317 (YS) contribute to the FMN site.

Belongs to the dihydroorotate dehydrogenase family. Type 2 subfamily. In terms of assembly, monomer. The cofactor is FMN.

It is found in the cell membrane. It catalyses the reaction (S)-dihydroorotate + a quinone = orotate + a quinol. The protein operates within pyrimidine metabolism; UMP biosynthesis via de novo pathway; orotate from (S)-dihydroorotate (quinone route): step 1/1. Its function is as follows. Catalyzes the conversion of dihydroorotate to orotate with quinone as electron acceptor. The chain is Dihydroorotate dehydrogenase (quinone) from Nitrosomonas eutropha (strain DSM 101675 / C91 / Nm57).